A 308-amino-acid polypeptide reads, in one-letter code: Pseudouridine-5'-phosphate glycosidase (308 aa).

Catalysis depends on Glu-28, which acts as the Proton donor. Substrate is bound by residues Lys-89 and Val-109. Residue Asp-141 coordinates Mn(2+). Position 143–145 (143–145) interacts with substrate; that stretch reads SAD. Lys-162 (nucleophile) is an active-site residue.

The protein belongs to the pseudouridine-5'-phosphate glycosidase family. As to quaternary structure, homotrimer. It depends on Mn(2+) as a cofactor.

The catalysed reaction is D-ribose 5-phosphate + uracil = psi-UMP + H2O. In terms of biological role, catalyzes the reversible cleavage of pseudouridine 5'-phosphate (PsiMP) to ribose 5-phosphate and uracil. Functions biologically in the cleavage direction, as part of a pseudouridine degradation pathway. This is Pseudouridine-5'-phosphate glycosidase from Brachyspira hyodysenteriae (strain ATCC 49526 / WA1).